Reading from the N-terminus, the 73-residue chain is Protein SlyX homolog (73 aa).

Belongs to the SlyX family.

This chain is Protein SlyX homolog, found in Pasteurella multocida (strain Pm70).